The following is a 186-amino-acid chain: PR-toxin biosynthesis cluster protein 7 (186 aa).

A helical transmembrane segment spans residues 24–43; the sequence is LGEVTTGGVTPRGTFIFCPI.

The protein resides in the membrane. The protein operates within sesquiterpene biosynthesis. Functionally, part of the gene cluster that mediates the biosynthesis of PR-toxin, a bicyclic sesquiterpene belonging to the eremophilane class and acting as a mycotoxin. The first step of the pathway is catalyzed by the aristolochene synthase which performs the cyclization of trans,trans-farnesyl diphosphate (FPP) to the bicyclic sesquiterpene aristolochene. Following the formation of aristolochene, the non-oxygenated aristolochene is converted to the trioxygenated intermediate eremofortin B, via 7-epi-neopetasone. This conversion appears to involve three enzymes, a hydroxysterol oxidase-like enzyme, the quinone-oxidase prx3 that forms the quinone-type-structure in the bicyclic nucleus of aristolochene with the C8-oxo group and the C-3 hydroxyl group, and the P450 monooxygenase ORF6 that introduces the epoxide at the double bond between carbons 1 and 2. No monoxy or dioxy-intermediates have been reported to be released to the broth, so these three early oxidative reactions may be coupled together. Eremofortin B is further oxidized by another P450 monooxygenase, that introduces a second epoxide between carbons 7 and 11 prior to acetylation to eremofortin A by the acetyltransferase ORF8. The second epoxidation may be performed by a second P450 monooxygenase. After the acetylation step, eremofortin A is converted to eremofortin C and then to PR-toxin. First the conversion of eremofortin A to eremofortin C proceeds by oxidation of the side chain of the molecule at C-12 and is catalyzed by the short-chain oxidoreductase prx1. The cytochrome P450 monooxygenase ORF6 is probably also involved in this step. The primary alcohol formed at C-12 is finally oxidized by the short-chain alcohol dehydrogenase prx4 that forms PR-toxin. This is PR-toxin biosynthesis cluster protein 7 from Penicillium roqueforti (strain FM164).